The sequence spans 105 residues: Protamine-2 (105 aa).

The tract at residues 1 to 74 (MVRYRMRSPS…RRSCRRRRRH (74 aa)) is disordered. A phosphoserine mark is found at serine 8 and serine 10. The segment covering 33-42 (NPERVEDYGR) has biased composition (basic and acidic residues). Residues 43–74 (THRGHHRHRRCSRKRLHRIHKRRRSCRRRRRH) are compositionally biased toward basic residues.

Belongs to the protamine P2 family. Interacts with TDRP. In terms of processing, proteolytic processing into mature chains is required for histone eviction during spermatogenesis. Transition proteins (TNP1 and TNP2) are required for processing. Testis.

Its subcellular location is the nucleus. The protein resides in the chromosome. In terms of biological role, protamines substitute for histones in the chromatin of sperm during the haploid phase of spermatogenesis. They compact sperm DNA into a highly condensed, stable and inactive complex. The sequence is that of Protamine-2 (Prm2) from Rattus tunneyi (Tunney's rat).